The chain runs to 893 residues: MDHHYDPQQTNDYMQPEEDWDRDLLLDPAWEKQQRKTFTAWCNSHLRKAGTQIENIEEDFRDGLKLMLLLEVISGERLAKPERGKMRVHKISNVNKALDFIASKGVKLVSIGAEEIVDGNVKMTLGMIWTIILRFAIQDISVEETSAKEGLLLWCQRKTAPYKNVNIQNFHISWKDGLGFCALIHRHRPELIDYGKLRKDDPLTNLNTAFDVAEKYLDIPKMLDAEDIVGTARPDEKAIMTYVSSFYHAFSGAQKAETAANRICKVLAVNQENEQLMEDYEKLASDLLEWIRRTIPWLENRAPENTMQAMQQKLEDFRDYRRLHKPPKVQEKCQLEINFNTLQTKLRLSNRPAFMPSEGKMVSDINNAWGGLEQAEKGYEEWLLNEIRRLERLDHLAEKFRQKASIHESWTDGKEAMLQQKDYETATLSEIKALLKKHEAFESDLAAHQDRVEQIAAIAQELNELDYYDSPSVNARCQKICDQWDNLGALTQKRREALERTEKLLETIDQLYLEYAKRAAPFNNWMEGAMEDLQDTFIVHTIEEIQGLTTAHEQFKATLPDADKERQAILGIHNEVSKIVQTYHVNMAGTNPYTTITPQEINGKWEHVRQLVPRRDQALMEEHARQQQNERLRKQFGAQANVIGPWIQTKMEEIGRISIEMHGTLEDQLNHLRQYEKSIVNYKPKIDQLEGDHQQIQEALIFDNKHTNYTMEHIRVGWEQLLTTIARTINEVENQILTRDAKGISQEQMNEFRASFNHFDRDHSGTLGPEEFKACLISLGYDIGNDAQGEAEFARIMSIVDPNRMGVVTFQAFIDFMSRETADTDTADQVMASFKILAGDKNYITVDELRRELPPDQAEYCIARMAPYNGRDAVPGALDYMSFSTALYGESDL.

The actin-binding stretch occupies residues 1 to 248; it reads MDHHYDPQQT…IMTYVSSFYH (248 aa). Tyrosine 13 carries the post-translational modification Phosphotyrosine; by FAK1. Calponin-homology (CH) domains follow at residues 32-136 and 145-251; these read KQQR…LRFA and TSAK…HAFS. 4 Spectrin repeats span residues 275 to 385, 395 to 500, 510 to 621, and 631 to 734; these read QLME…WLLN, HLAE…ALER, QLYL…ALME, and RLRK…EVEN. EF-hand domains lie at 747–782 and 788–823; these read EQMN…LGYD and QGEA…ETAD. Ca(2+) is bound by residues aspartate 760, aspartate 762, serine 764, threonine 766, and glutamate 771.

The protein belongs to the alpha-actinin family. Homodimer; antiparallel. Interacts with PDLIM4 (via PDZ domain).

The protein resides in the cytoplasm. It localises to the cytoskeleton. It is found in the myofibril. The protein localises to the sarcomere. Its subcellular location is the z line. The protein resides in the cell membrane. It localises to the cell junction. It is found in the cell projection. The protein localises to the ruffle. Functionally, F-actin cross-linking protein is thought to anchor actin to a variety of intracellular structures. This is a bundling protein. The polypeptide is Alpha-actinin-1 (ACTN1) (Gallus gallus (Chicken)).